Reading from the N-terminus, the 354-residue chain is ORC1-type DNA replication protein 9 (354 aa).

ATP-binding positions include 63 to 67, tyrosine 195, and arginine 207; that span reads TGKTC.

It belongs to the CDC6/cdc18 family.

Involved in regulation of DNA replication. This is ORC1-type DNA replication protein 9 (orc9-1) from Halobacterium salinarum (strain ATCC 700922 / JCM 11081 / NRC-1) (Halobacterium halobium).